Reading from the N-terminus, the 380-residue chain is Glucose-1-phosphate adenylyltransferase (380 aa).

Residues glycine 164, 179–180 (EK), and serine 190 contribute to the alpha-D-glucose 1-phosphate site.

It belongs to the bacterial/plant glucose-1-phosphate adenylyltransferase family. Homotetramer.

It carries out the reaction alpha-D-glucose 1-phosphate + ATP + H(+) = ADP-alpha-D-glucose + diphosphate. The protein operates within glycan biosynthesis; glycogen biosynthesis. Its function is as follows. Involved in the biosynthesis of ADP-glucose, a building block required for the elongation reactions to produce glycogen. Catalyzes the reaction between ATP and alpha-D-glucose 1-phosphate (G1P) to produce pyrophosphate and ADP-Glc. The sequence is that of Glucose-1-phosphate adenylyltransferase from Lactococcus lactis subsp. lactis (strain IL1403) (Streptococcus lactis).